The chain runs to 414 residues: ZP domain-containing protein (414 aa).

The first 17 residues, 1–17, serve as a signal peptide directing secretion; sequence MFLYSFVFLMLLGLSSA. The tract at residues 18 to 65 is disordered; that stretch reads QTESATSPDEVETEPTMSTDQPETSPSMSTETEPTTETPPVTTPPPPD. The Extracellular portion of the chain corresponds to 18-364; it reads QTESATSPDE…GAQEAVSSLT (347 aa). The segment covering 39 to 57 has biased composition (low complexity); the sequence is PETSPSMSTETEPTTETPP. The 254-residue stretch at 70 to 323 folds into the ZP domain; the sequence is ICTNEKMEVF…SRCAKGCETS (254 aa). Cys-241 and Cys-302 are joined by a disulfide. Residues 365-385 traverse the membrane as a helical segment; the sequence is IFAAVAGVLGVIVLFLAVALV. At 386 to 414 the chain is on the cytoplasmic side; that stretch reads MLYKRYRSPQSATRVVYTKTANEEGKLLV.

As to expression, component of the acid-insoluble and acid-soluble organic matrix of the aragonitic skeleton (at protein level).

It is found in the membrane. The protein is ZP domain-containing protein of Acropora millepora (Staghorn coral).